Reading from the N-terminus, the 342-residue chain is Putative aryl-alcohol dehydrogenase AAD16 (342 aa).

Belongs to the aldo/keto reductase family. Aldo/keto reductase 2 subfamily.

Functionally, putative aryl-alcohol dehydrogenase. The chain is Putative aryl-alcohol dehydrogenase AAD16 from Saccharomyces cerevisiae (strain ATCC 204508 / S288c) (Baker's yeast).